The sequence spans 284 residues: Tropomyosin Por p 1.0101 (284 aa).

Methionine 1 bears the N-acetylmethionine mark. The segment at 1–21 (MDAIKKKMQAMKLEKDDAMDR) is disordered. The stretch at 1 to 280 (MDAIKKKMQA…TDELDQAFSE (280 aa)) forms a coiled coil. Residues 12-21 (KLEKDDAMDR) show a composition bias toward basic and acidic residues.

This sequence belongs to the tropomyosin family. Homodimer. Expressed in muscle (at protein level). Expressed in pincer muscles.

Its function is as follows. Tropomyosin, in association with the troponin complex, plays a central role in the calcium dependent regulation of muscle contraction. This chain is Tropomyosin Por p 1.0101, found in Portunus pelagicus (Blue swimmer crab).